The sequence spans 339 residues: Type IV secretion system protein PtlH homolog (339 aa).

Belongs to the GSP E family.

The sequence is that of Type IV secretion system protein PtlH homolog (ptlH) from Bordetella parapertussis (strain 12822 / ATCC BAA-587 / NCTC 13253).